The following is a 1402-amino-acid chain: Transcription factor SPT20 homolog (1402 aa).

7 disordered regions span residues 1 to 29 (MNGN…EQEQ), 60 to 107 (VNSL…LDTD), 114 to 133 (NNDS…SSSS), 177 to 206 (QTTL…NNIL), 786 to 817 (APST…PTPV), 1136 to 1174 (PQQI…QYQT), and 1199 to 1250 (QPLQ…PPQI). The segment covering 7–29 (VHTEENKNEHQQEGKGGEQEQEQ) has biased composition (basic and acidic residues). The span at 60-72 (VNSLSEPTPNEQQ) shows a compositional bias: polar residues. Positions 73–102 (NNNNNNNSNGNGNGNDETTSSKTTTIINSN) are enriched in low complexity. Low complexity-rich tracts occupy residues 183–204 (NNNN…NNNN), 786–812 (APST…TTPT), 1136–1150 (PQQI…PPNQ), 1157–1174 (SPQS…QYQT), 1199–1218 (QPLQ…QQQQ), and 1226–1250 (PQQF…PPQI).

Belongs to the SPT20 family.

The polypeptide is Transcription factor SPT20 homolog (Dictyostelium discoideum (Social amoeba)).